Reading from the N-terminus, the 377-residue chain is F-box protein At1g11810 (377 aa).

Positions 2 to 48 (TTTMSTLPVVLVDEILARVPITSLRSLRSTCKKWEASSKTNLVGGKA) constitute an F-box domain.

This is F-box protein At1g11810 from Arabidopsis thaliana (Mouse-ear cress).